We begin with the raw amino-acid sequence, 192 residues long: Ion-translocating oxidoreductase complex subunit A (192 aa).

The next 6 membrane-spanning stretches (helical) occupy residues 5-25, 39-59, 63-83, 102-122, 134-154, and 171-191; these read ILLIIGTALINNFVLVKFLGL, VGMGLATMFVLTVASLCAYLV, ILIPLNATFLRTLVFILVIAV, LLGIFLPLITTNCAVLGVALL, VVYGFGASLGFSLVLVLFAAL, and AIALITAGLMSLAFMGFTGLV.

Belongs to the NqrDE/RnfAE family. In terms of assembly, the complex is composed of six subunits: RnfA, RnfB, RnfC, RnfD, RnfE and RnfG.

It localises to the cell inner membrane. In terms of biological role, part of a membrane-bound complex that couples electron transfer with translocation of ions across the membrane. The chain is Ion-translocating oxidoreductase complex subunit A from Haemophilus influenzae (strain 86-028NP).